The following is a 211-amino-acid chain: Histidine biosynthesis bifunctional protein HisIE (211 aa).

The segment at 1–122 (MSFKAAEVSS…DAQEESQMVW (122 aa)) is phosphoribosyl-AMP cyclohydrolase. Residues 123 to 211 (LHQLEQLLAA…VVNKLKERHK (89 aa)) are phosphoribosyl-ATP pyrophosphohydrolase.

In the N-terminal section; belongs to the PRA-CH family. The protein in the C-terminal section; belongs to the PRA-PH family.

It localises to the cytoplasm. The catalysed reaction is 1-(5-phospho-beta-D-ribosyl)-ATP + H2O = 1-(5-phospho-beta-D-ribosyl)-5'-AMP + diphosphate + H(+). It catalyses the reaction 1-(5-phospho-beta-D-ribosyl)-5'-AMP + H2O = 1-(5-phospho-beta-D-ribosyl)-5-[(5-phospho-beta-D-ribosylamino)methylideneamino]imidazole-4-carboxamide. The protein operates within amino-acid biosynthesis; L-histidine biosynthesis; L-histidine from 5-phospho-alpha-D-ribose 1-diphosphate: step 2/9. It functions in the pathway amino-acid biosynthesis; L-histidine biosynthesis; L-histidine from 5-phospho-alpha-D-ribose 1-diphosphate: step 3/9. This Vibrio parahaemolyticus serotype O3:K6 (strain RIMD 2210633) protein is Histidine biosynthesis bifunctional protein HisIE.